A 338-amino-acid chain; its full sequence is P2Y purinoceptor 14 (338 aa).

The Extracellular portion of the chain corresponds to 1 to 29 (MINSTSTQPPDESCSQNLLITQQIIPVLY). Asparagine 3 is a glycosylation site (N-linked (GlcNAc...) asparagine). The chain crosses the membrane as a helical span at residues 30 to 50 (CMVFIAGILLNGVSGWIFFYV). Topologically, residues 51 to 55 (PSSKS) are cytoplasmic. Residues 56-76 (FIIYLKNIVIADFVMSLTFPF) traverse the membrane as a helical segment. Residues 77–96 (KILGDSGLGPWQLNVFVCRV) are Extracellular-facing. A disulfide bond links cysteine 94 and cysteine 172. Residues 97–117 (SAVLFYVNMYVSIVFFGLISF) form a helical membrane-spanning segment. At 118–139 (DRYYKIVKPLWTSFIQSVSYSK) the chain is on the cytoplasmic side. A helical transmembrane segment spans residues 140–160 (LLSVIVWMLMLLLAVPNIILT). Asparagine 161 carries an N-linked (GlcNAc...) asparagine glycan. Residues 161–188 (NQSVREVTQIKCIELKSELGRKWHKASN) are Extracellular-facing. The helical transmembrane segment at 189 to 209 (YIFVAIFWIVFLLLIVFYTAI) threads the bilayer. Residues 210-234 (TKKIFKSHLKSSRNSTSVKKKSSRN) lie on the Cytoplasmic side of the membrane. A helical transmembrane segment spans residues 235 to 255 (IFSIVFVFFVCFVPYHIARIP). Over 256 to 278 (YTKSQTEAHYSCQSKEILRYMKE) the chain is Extracellular. Residues 279–299 (FTLLLSAANVCLDPIIYFFLC) form a helical membrane-spanning segment. Topologically, residues 300-338 (QPFREILCKKLHIPLKAQNDLDISRIKRGNTTLESTDTL) are cytoplasmic.

Belongs to the G-protein coupled receptor 1 family. In terms of tissue distribution, highest expression in the placenta, adipose tissue, stomach and intestine, intermediate levels in the brain, spleen, lung and heart, lowest levels in the kidney.

The protein localises to the cell membrane. Receptor for UDP-glucose and other UDP-sugar coupled to G-proteins. Not activated by ATP, ADP, UTP or ATP. The chain is P2Y purinoceptor 14 (P2RY14) from Homo sapiens (Human).